A 115-amino-acid chain; its full sequence is Hydrogenase maturation factor HypA (115 aa).

Histidine 2 contributes to the Ni(2+) binding site. Cysteine 73, cysteine 76, cysteine 89, and cysteine 92 together coordinate Zn(2+).

This sequence belongs to the HypA/HybF family.

In terms of biological role, involved in the maturation of [NiFe] hydrogenases. Required for nickel insertion into the metal center of the hydrogenase. The protein is Hydrogenase maturation factor HypA of Aquifex aeolicus (strain VF5).